Consider the following 360-residue polypeptide: Phenylalanine--tRNA ligase alpha subunit (360 aa).

Residue E260 participates in Mg(2+) binding.

It belongs to the class-II aminoacyl-tRNA synthetase family. Phe-tRNA synthetase alpha subunit type 1 subfamily. In terms of assembly, tetramer of two alpha and two beta subunits. Mg(2+) is required as a cofactor.

It localises to the cytoplasm. The enzyme catalyses tRNA(Phe) + L-phenylalanine + ATP = L-phenylalanyl-tRNA(Phe) + AMP + diphosphate + H(+). This is Phenylalanine--tRNA ligase alpha subunit from Rhizobium etli (strain ATCC 51251 / DSM 11541 / JCM 21823 / NBRC 15573 / CFN 42).